Here is a 157-residue protein sequence, read N- to C-terminus: Endoribonuclease YbeY (157 aa).

His114, His118, and His124 together coordinate Zn(2+).

The protein belongs to the endoribonuclease YbeY family. Zn(2+) serves as cofactor.

Its subcellular location is the cytoplasm. Functionally, single strand-specific metallo-endoribonuclease involved in late-stage 70S ribosome quality control and in maturation of the 3' terminus of the 16S rRNA. The sequence is that of Endoribonuclease YbeY from Serratia proteamaculans (strain 568).